A 457-amino-acid polypeptide reads, in one-letter code: Bifunctional protein GlmU (457 aa).

Residues 1 to 229 are pyrophosphorylase; sequence MYNCAIILAA…YEEIMGVNSR (229 aa). UDP-N-acetyl-alpha-D-glucosamine-binding positions include 8 to 11, Lys-22, Gln-73, and 78 to 79; these read LAAG and GT. Asp-103 lines the Mg(2+) pocket. 4 residues coordinate UDP-N-acetyl-alpha-D-glucosamine: Gly-140, Glu-155, Asn-170, and Asn-227. Mg(2+) is bound at residue Asn-227. Residues 230 to 250 are linker; sequence VQLSEAEIVMRKRINHKHMVN. The N-acetyltransferase stretch occupies residues 251-457; that stretch reads GVTFIDCEST…WLDKKGLLKK (207 aa). Residues Arg-332 and Lys-350 each contribute to the UDP-N-acetyl-alpha-D-glucosamine site. The active-site Proton acceptor is the His-362. Residues Tyr-365 and Asn-376 each contribute to the UDP-N-acetyl-alpha-D-glucosamine site. Acetyl-CoA contacts are provided by residues 385-386, Ala-422, and Arg-439; that span reads NY.

It in the N-terminal section; belongs to the N-acetylglucosamine-1-phosphate uridyltransferase family. The protein in the C-terminal section; belongs to the transferase hexapeptide repeat family. In terms of assembly, homotrimer. It depends on Mg(2+) as a cofactor.

The protein resides in the cytoplasm. The enzyme catalyses alpha-D-glucosamine 1-phosphate + acetyl-CoA = N-acetyl-alpha-D-glucosamine 1-phosphate + CoA + H(+). It carries out the reaction N-acetyl-alpha-D-glucosamine 1-phosphate + UTP + H(+) = UDP-N-acetyl-alpha-D-glucosamine + diphosphate. The protein operates within nucleotide-sugar biosynthesis; UDP-N-acetyl-alpha-D-glucosamine biosynthesis; N-acetyl-alpha-D-glucosamine 1-phosphate from alpha-D-glucosamine 6-phosphate (route II): step 2/2. Its pathway is nucleotide-sugar biosynthesis; UDP-N-acetyl-alpha-D-glucosamine biosynthesis; UDP-N-acetyl-alpha-D-glucosamine from N-acetyl-alpha-D-glucosamine 1-phosphate: step 1/1. It functions in the pathway bacterial outer membrane biogenesis; LPS lipid A biosynthesis. Catalyzes the last two sequential reactions in the de novo biosynthetic pathway for UDP-N-acetylglucosamine (UDP-GlcNAc). The C-terminal domain catalyzes the transfer of acetyl group from acetyl coenzyme A to glucosamine-1-phosphate (GlcN-1-P) to produce N-acetylglucosamine-1-phosphate (GlcNAc-1-P), which is converted into UDP-GlcNAc by the transfer of uridine 5-monophosphate (from uridine 5-triphosphate), a reaction catalyzed by the N-terminal domain. The chain is Bifunctional protein GlmU from Clostridium botulinum (strain Kyoto / Type A2).